A 404-amino-acid chain; its full sequence is Cysteine desulfurase IscS (404 aa).

Residues 75–76 (AT), Asn155, Gln183, and 203–205 (SGH) each bind pyridoxal 5'-phosphate. Lys206 bears the N6-(pyridoxal phosphate)lysine mark. Pyridoxal 5'-phosphate is bound at residue Thr243. The active-site Cysteine persulfide intermediate is the Cys328. Cys328 is a binding site for [2Fe-2S] cluster.

This sequence belongs to the class-V pyridoxal-phosphate-dependent aminotransferase family. NifS/IscS subfamily. As to quaternary structure, homodimer. Forms a heterotetramer with IscU, interacts with other sulfur acceptors. The cofactor is pyridoxal 5'-phosphate.

The protein localises to the cytoplasm. It carries out the reaction (sulfur carrier)-H + L-cysteine = (sulfur carrier)-SH + L-alanine. It functions in the pathway cofactor biosynthesis; iron-sulfur cluster biosynthesis. Its function is as follows. Master enzyme that delivers sulfur to a number of partners involved in Fe-S cluster assembly, tRNA modification or cofactor biosynthesis. Catalyzes the removal of elemental sulfur atoms from cysteine to produce alanine. Functions as a sulfur delivery protein for Fe-S cluster synthesis onto IscU, an Fe-S scaffold assembly protein, as well as other S acceptor proteins. The sequence is that of Cysteine desulfurase IscS from Shewanella pealeana (strain ATCC 700345 / ANG-SQ1).